The chain runs to 565 residues: NAD-dependent malic enzyme (565 aa).

The active-site Proton donor is the Tyr-104. Residue Arg-157 participates in NAD(+) binding. Catalysis depends on Lys-175, which acts as the Proton acceptor. 3 residues coordinate a divalent metal cation: Glu-246, Asp-247, and Asp-270. The NAD(+) site is built by Asp-270 and Asn-418.

It belongs to the malic enzymes family. In terms of assembly, homotetramer. Mg(2+) serves as cofactor. It depends on Mn(2+) as a cofactor.

The catalysed reaction is (S)-malate + NAD(+) = pyruvate + CO2 + NADH. It catalyses the reaction oxaloacetate + H(+) = pyruvate + CO2. The protein is NAD-dependent malic enzyme of Escherichia coli O127:H6 (strain E2348/69 / EPEC).